Consider the following 93-residue polypeptide: Pyrimidine/purine nucleoside phosphorylase (93 aa).

Belongs to the nucleoside phosphorylase PpnP family.

It catalyses the reaction a purine D-ribonucleoside + phosphate = a purine nucleobase + alpha-D-ribose 1-phosphate. It carries out the reaction adenosine + phosphate = alpha-D-ribose 1-phosphate + adenine. The catalysed reaction is cytidine + phosphate = cytosine + alpha-D-ribose 1-phosphate. The enzyme catalyses guanosine + phosphate = alpha-D-ribose 1-phosphate + guanine. It catalyses the reaction inosine + phosphate = alpha-D-ribose 1-phosphate + hypoxanthine. It carries out the reaction thymidine + phosphate = 2-deoxy-alpha-D-ribose 1-phosphate + thymine. The catalysed reaction is uridine + phosphate = alpha-D-ribose 1-phosphate + uracil. The enzyme catalyses xanthosine + phosphate = alpha-D-ribose 1-phosphate + xanthine. Its function is as follows. Catalyzes the phosphorolysis of diverse nucleosides, yielding D-ribose 1-phosphate and the respective free bases. Can use uridine, adenosine, guanosine, cytidine, thymidine, inosine and xanthosine as substrates. Also catalyzes the reverse reactions. This chain is Pyrimidine/purine nucleoside phosphorylase, found in Pseudomonas aeruginosa (strain LESB58).